Here is a 144-residue protein sequence, read N- to C-terminus: Large ribosomal subunit protein uL15 (144 aa).

Residues 1–52 (MRLNTLSPAEGAKHAPKRVGRGIGSGLGKTAGRGHKGQNSRSGGGVRRGFEG) form a disordered region. Over residues 21-31 (RGIGSGLGKTA) the composition is skewed to gly residues.

Belongs to the universal ribosomal protein uL15 family. In terms of assembly, part of the 50S ribosomal subunit.

Binds to the 23S rRNA. This Yersinia pseudotuberculosis serotype O:1b (strain IP 31758) protein is Large ribosomal subunit protein uL15.